Here is a 282-residue protein sequence, read N- to C-terminus: 4-diphosphocytidyl-2-C-methyl-D-erythritol kinase (282 aa).

K13 is a catalytic residue. 96–106 (PMGGGIGGGSS) is an ATP binding site. The active site involves D138.

It belongs to the GHMP kinase family. IspE subfamily.

It catalyses the reaction 4-CDP-2-C-methyl-D-erythritol + ATP = 4-CDP-2-C-methyl-D-erythritol 2-phosphate + ADP + H(+). Its pathway is isoprenoid biosynthesis; isopentenyl diphosphate biosynthesis via DXP pathway; isopentenyl diphosphate from 1-deoxy-D-xylulose 5-phosphate: step 3/6. Functionally, catalyzes the phosphorylation of the position 2 hydroxy group of 4-diphosphocytidyl-2C-methyl-D-erythritol. The sequence is that of 4-diphosphocytidyl-2-C-methyl-D-erythritol kinase from Pseudomonas syringae pv. syringae (strain B728a).